The following is a 513-amino-acid chain: Maturase K (513 aa).

Belongs to the intron maturase 2 family. MatK subfamily.

Its subcellular location is the plastid. It localises to the chloroplast. Usually encoded in the trnK tRNA gene intron. Probably assists in splicing its own and other chloroplast group II introns. The protein is Maturase K of Zea mays (Maize).